A 536-amino-acid chain; its full sequence is ATP synthase subunit alpha, mitochondrial (536 aa).

The N-terminal 27 residues, 1–27 (MLRQAGTRLLKVPVCGLRPSITLKRGY), are a transit peptide targeting the mitochondrion. 197–204 (GDRQTGKT) serves as a coordination point for ATP.

It belongs to the ATPase alpha/beta chains family. F-type ATPases have 2 components, CF(1) - the catalytic core - and CF(0) - the membrane proton channel. CF(1) has five subunits: alpha(3), beta(3), gamma(1), delta(1), epsilon(1). CF(0) has three main subunits: a, b and c.

The protein resides in the mitochondrion. Its subcellular location is the mitochondrion inner membrane. Functionally, mitochondrial membrane ATP synthase (F(1)F(0) ATP synthase or Complex V) produces ATP from ADP in the presence of a proton gradient across the membrane which is generated by electron transport complexes of the respiratory chain. F-type ATPases consist of two structural domains, F(1) - containing the extramembraneous catalytic core, and F(0) - containing the membrane proton channel, linked together by a central stalk and a peripheral stalk. During catalysis, ATP synthesis in the catalytic domain of F(1) is coupled via a rotary mechanism of the central stalk subunits to proton translocation. Subunits alpha and beta form the catalytic core in F(1). Rotation of the central stalk against the surrounding alpha(3)beta(3) subunits leads to hydrolysis of ATP in three separate catalytic sites on the beta subunits. Subunit alpha does not bear the catalytic high-affinity ATP-binding sites. This Schizosaccharomyces pombe (strain 972 / ATCC 24843) (Fission yeast) protein is ATP synthase subunit alpha, mitochondrial (atp1).